The sequence spans 130 residues: Anti-adapter protein IraD (130 aa).

Belongs to the GpW/Gp25 family. IraD subfamily. In terms of assembly, interacts with RssB.

The protein resides in the cytoplasm. In terms of biological role, inhibits RpoS proteolysis by regulating RssB activity, thereby increasing the stability of the sigma stress factor RpoS during oxidative stress. Its effect on RpoS stability is due to its interaction with RssB, which probably blocks the interaction of RssB with RpoS, and the consequent delivery of the RssB-RpoS complex to the ClpXP protein degradation pathway. This chain is Anti-adapter protein IraD, found in Escherichia coli O139:H28 (strain E24377A / ETEC).